We begin with the raw amino-acid sequence, 71 residues long: uncharacterized protein (71 aa).

This is an uncharacterized protein from Escherichia coli (strain K12).